Reading from the N-terminus, the 489-residue chain is IPT/TIG domain-containing protein BACOVA_02650 (489 aa).

The first 27 residues, 1 to 27 (MKSIYKYLDTRLFLIGLLVLPFLAVVS), serve as a signal peptide directing secretion. Residue cysteine 28 is the site of N-palmitoyl cysteine attachment. A lipid anchor (S-diacylglycerol cysteine) is attached at cysteine 28. IPT/TIG domains are found at residues 57–103 (VNPG…PNEL), 136–204 (PYIT…TAPA), and 232–304 (PVVT…AIGG).

Its subcellular location is the cell outer membrane. It participates in glucan metabolism; xyloglucan degradation. Its function is as follows. Polysaccharide-binding protein present at the surface of the cell. Probably mediates xyloglucan-binding before xyloglucan transport in the periplasm for degradation. The polypeptide is IPT/TIG domain-containing protein BACOVA_02650 (Bacteroides ovatus (strain ATCC 8483 / DSM 1896 / JCM 5824 / BCRC 10623 / CCUG 4943 / NCTC 11153)).